The primary structure comprises 176 residues: Inner membrane protein p54 (176 aa).

A helical membrane pass occupies residues 32-52 (YTILIAIVVLIIIIIVLIYLF). The disordered stretch occupies residues 82–176 (VTPQPGIAKP…YTHKDLENSL (95 aa)). The segment covering 123–154 (GMAAGGPAAASAPAHPAELYTTATTQNTASQT) has biased composition (low complexity). The segment at 142–154 (YTTATTQNTASQT) is interaction with host DYNLL1.

It belongs to the asfivirus envelope protein p54 family. Interacts with the host light chain cytoplasmic dynein DYNLL1; this interaction is critical for intracellular microtubule-dependent virus transport toward viral factories.

The protein resides in the virion membrane. It localises to the host cytoplasm. The protein localises to the host cytoskeleton. Its subcellular location is the host endoplasmic reticulum membrane. Inner envelope protein involved, through its interaction with host dynein, in the intracellular microtubule-dependent transport of viral capsid toward viral factories. Seems to induce caspase-3 activation and apoptosis. Plays a role in virion morphogenesis by recruiting and transforming the host ER membranes into the precursors of the viral envelope. Involved in virus attachment to the host cell. This African swine fever virus (isolate Tick/Malawi/Lil 20-1/1983) (ASFV) protein is Inner membrane protein p54.